A 119-amino-acid polypeptide reads, in one-letter code: Ribonuclease P protein component (119 aa).

This sequence belongs to the RnpA family. As to quaternary structure, consists of a catalytic RNA component (M1 or rnpB) and a protein subunit.

The catalysed reaction is Endonucleolytic cleavage of RNA, removing 5'-extranucleotides from tRNA precursor.. RNaseP catalyzes the removal of the 5'-leader sequence from pre-tRNA to produce the mature 5'-terminus. It can also cleave other RNA substrates such as 4.5S RNA. The protein component plays an auxiliary but essential role in vivo by binding to the 5'-leader sequence and broadening the substrate specificity of the ribozyme. The protein is Ribonuclease P protein component of Aeromonas hydrophila subsp. hydrophila (strain ATCC 7966 / DSM 30187 / BCRC 13018 / CCUG 14551 / JCM 1027 / KCTC 2358 / NCIMB 9240 / NCTC 8049).